Here is a 385-residue protein sequence, read N- to C-terminus: Lipid-A-disaccharide synthase 2 (385 aa).

Belongs to the LpxB family.

The catalysed reaction is a lipid X + a UDP-2-N,3-O-bis[(3R)-3-hydroxyacyl]-alpha-D-glucosamine = a lipid A disaccharide + UDP + H(+). Its pathway is bacterial outer membrane biogenesis; LPS lipid A biosynthesis. In terms of biological role, condensation of UDP-2,3-diacylglucosamine and 2,3-diacylglucosamine-1-phosphate to form lipid A disaccharide, a precursor of lipid A, a phosphorylated glycolipid that anchors the lipopolysaccharide to the outer membrane of the cell. This is Lipid-A-disaccharide synthase 2 from Legionella pneumophila (strain Lens).